The chain runs to 120 residues: Ribosome-binding factor A (120 aa).

This sequence belongs to the RbfA family. In terms of assembly, monomer. Binds 30S ribosomal subunits, but not 50S ribosomal subunits or 70S ribosomes.

It localises to the cytoplasm. In terms of biological role, one of several proteins that assist in the late maturation steps of the functional core of the 30S ribosomal subunit. Associates with free 30S ribosomal subunits (but not with 30S subunits that are part of 70S ribosomes or polysomes). Required for efficient processing of 16S rRNA. May interact with the 5'-terminal helix region of 16S rRNA. In Dictyoglomus thermophilum (strain ATCC 35947 / DSM 3960 / H-6-12), this protein is Ribosome-binding factor A.